The chain runs to 408 residues: MSLSVTRENFDEWMVPVYVPAPFIPVRGEGSRLWDQQGKEYIDFAGGIAVNALGHAHPALREALNEQANRFWHTGNGYTNEPALRLAKKLIDATFAERVFFCNSGAEANEAALKLARKYAHDRVGNHKSGIVAFKNAFHGRTLFTVSAGGQPTYSQDFAPLPPDIRHAAYNDLNSASALIDDNTCAVIVEPVQGEGGVIPATKAFLQGLRELCDRHQALLIFDEVQTGVGRTGELYAYMHYGVTPDILTTAKALGGGFPIGAMLTTQDYASVMTPGTHGTTYGGNPLATAVAGKVLDIINTPEMQNGVRQRHDAFIERLNTINVRFGMFSEIRGLGLLLGCVLQTEFAGKAKLIAQEAAKAGVMVLIAGGDVVRFAPALNVSDEEIATGLDRFALACERLQTGGASCG.

Position 252 is an N6-(pyridoxal phosphate)lysine (Lys252).

This sequence belongs to the class-III pyridoxal-phosphate-dependent aminotransferase family. AstC subfamily. Pyridoxal 5'-phosphate serves as cofactor.

It catalyses the reaction N(2)-succinyl-L-ornithine + 2-oxoglutarate = N-succinyl-L-glutamate 5-semialdehyde + L-glutamate. It participates in amino-acid degradation; L-arginine degradation via AST pathway; L-glutamate and succinate from L-arginine: step 3/5. Functionally, catalyzes the transamination of N(2)-succinylornithine and alpha-ketoglutarate into N(2)-succinylglutamate semialdehyde and glutamate. Can also act as an acetylornithine aminotransferase. The chain is Succinylornithine transaminase from Salmonella heidelberg (strain SL476).